The sequence spans 743 residues: Glycerol-3-phosphate O-acyltransferase 2 (743 aa).

Topologically, residues 1–34 (MSAPAADHNAAKPIPHVPQASRRYKNSYNGFVYN) are lumenal. A helical membrane pass occupies residues 35-55 (IHTWLYDVSVFLFNILFTIFF). Residues 56–442 (REIKVRGAYN…TKLEALRCFV (387 aa)) lie on the Cytoplasmic side of the membrane. Residues 443 to 457 (TLIVRLIKFSVFAIL) traverse the membrane as a helical segment. A topological domain (lumenal) is located at residue S458. A helical membrane pass occupies residues 459–473 (LPGSILFTPIFIICR). Over 474 to 501 (VYSEKKAKEGLKKSLVKIKGTDLLATWK) the chain is Cytoplasmic. A helical transmembrane segment spans residues 502 to 522 (LIVALILAPILYVTYSILLII). Residues 523–531 (LARKQHYCR) are Lumenal-facing. The helical transmembrane segment at 532–552 (IWVPSNNAFIQFVYFYALLVF) threads the bilayer. Residues 553–743 (TTYSSLKTGE…RQKREHEKKE (191 aa)) are Cytoplasmic-facing. Phosphoserine occurs at positions 632, 637, 647, 651, 654, 657, 664, 668, and 671. Position 673 is a phosphothreonine (T673). Residues 682-743 (KQGQWKSEGE…RQKREHEKKE (62 aa)) are disordered. Position 688 is a phosphoserine (S688). Residues 691–700 (ETSEDEDEFD) show a composition bias toward acidic residues. A Phosphothreonine modification is found at T692. At S693 the chain carries Phosphoserine.

Belongs to the GPAT/DAPAT family. Post-translationally, phosphorylated at a conserved motif involving Ser-664, Ser-668 and Ser-671. This phosphorylation plays a critical role for efficient TAG mobilization. Phosphorylation deficiency at this motif increases the enzyme activity and consequently induces de novo formation of phosphatidic acid.

The protein resides in the lipid droplet. It is found in the endoplasmic reticulum membrane. It carries out the reaction sn-glycerol 3-phosphate + an acyl-CoA = a 1-acyl-sn-glycero-3-phosphate + CoA. It catalyses the reaction dihydroxyacetone phosphate + an acyl-CoA = a 1-acylglycerone 3-phosphate + CoA. The enzyme catalyses sn-glycerol 3-phosphate + hexadecanoyl-CoA = 1-hexadecanoyl-sn-glycero-3-phosphate + CoA. The catalysed reaction is (9Z)-hexadecenoyl-CoA + sn-glycerol 3-phosphate = 1-(9Z-hexadecenoyl)-sn-glycero-3-phosphate + CoA. It carries out the reaction sn-glycerol 3-phosphate + octadecanoyl-CoA = 1-octadecanoyl-sn-glycero-3-phosphate + CoA. It catalyses the reaction sn-glycerol 3-phosphate + (9Z)-octadecenoyl-CoA = 1-(9Z-octadecenoyl)-sn-glycero-3-phosphate + CoA. It participates in phospholipid metabolism; CDP-diacylglycerol biosynthesis; CDP-diacylglycerol from sn-glycerol 3-phosphate: step 1/3. Functionally, dual substrate-specific glycerol-3-phosphate/dihydroxyacetone phosphate sn-1 acyltransferase, catalyzing the first and committed reaction in the de novo synthesis of glycerophospholipids and triacylglycerols (TAGs). Can use both Gly-3-P and dihydroxyacetone phosphate with similar efficiencies and has a broad fatty acyl-CoA specificity profile. Transfers a fatty acid from fatty acyl-CoA to the sn-1 position of glycerol-3-phosphate to produce lysophosphatidic acid (LysoPA). These lipids not only are precursors of glycerolipids, but also are dynamic components of signal transduction systems that control cell physiology. This is Glycerol-3-phosphate O-acyltransferase 2 (GPT2) from Saccharomyces cerevisiae (strain ATCC 204508 / S288c) (Baker's yeast).